Consider the following 860-residue polypeptide: Probable inorganic carbon transporter subunit DabA (860 aa).

Residues 1–32 (MTTTSLGADAAHTHAMVPSAIPPEGSDAAGPD) are disordered. Cysteine 369, aspartate 371, histidine 551, and cysteine 566 together coordinate Zn(2+).

Belongs to the inorganic carbon transporter (TC 9.A.2) DabA family. As to quaternary structure, forms a complex with DabB. The cofactor is Zn(2+).

The protein resides in the cell inner membrane. Part of an energy-coupled inorganic carbon pump. This chain is Probable inorganic carbon transporter subunit DabA, found in Ralstonia pickettii (strain 12D).